The following is a 532-amino-acid chain: Glucose-6-phosphate isomerase (532 aa).

Glutamate 330 serves as the catalytic Proton donor. Residues histidine 359 and lysine 461 contribute to the active site.

The protein belongs to the GPI family.

It localises to the cytoplasm. The enzyme catalyses alpha-D-glucose 6-phosphate = beta-D-fructose 6-phosphate. The protein operates within carbohydrate biosynthesis; gluconeogenesis. It functions in the pathway carbohydrate degradation; glycolysis; D-glyceraldehyde 3-phosphate and glycerone phosphate from D-glucose: step 2/4. Its function is as follows. Catalyzes the reversible isomerization of glucose-6-phosphate to fructose-6-phosphate. The chain is Glucose-6-phosphate isomerase from Synechococcus sp. (strain CC9605).